The primary structure comprises 205 residues: 3-isopropylmalate dehydratase small subunit (205 aa).

Belongs to the LeuD family. LeuD type 1 subfamily. In terms of assembly, heterodimer of LeuC and LeuD.

The catalysed reaction is (2R,3S)-3-isopropylmalate = (2S)-2-isopropylmalate. It participates in amino-acid biosynthesis; L-leucine biosynthesis; L-leucine from 3-methyl-2-oxobutanoate: step 2/4. In terms of biological role, catalyzes the isomerization between 2-isopropylmalate and 3-isopropylmalate, via the formation of 2-isopropylmaleate. This is 3-isopropylmalate dehydratase small subunit from Christiangramia forsetii (strain DSM 17595 / CGMCC 1.15422 / KT0803) (Gramella forsetii).